Consider the following 177-residue polypeptide: Large ribosomal subunit protein uL6 (177 aa).

It belongs to the universal ribosomal protein uL6 family. As to quaternary structure, part of the 50S ribosomal subunit.

In terms of biological role, this protein binds to the 23S rRNA, and is important in its secondary structure. It is located near the subunit interface in the base of the L7/L12 stalk, and near the tRNA binding site of the peptidyltransferase center. The protein is Large ribosomal subunit protein uL6 of Bartonella henselae (strain ATCC 49882 / DSM 28221 / CCUG 30454 / Houston 1) (Rochalimaea henselae).